A 230-amino-acid polypeptide reads, in one-letter code: Response regulator MprA (230 aa).

Residues 4 to 118 (RILVVDDDRA…ELLARMRALL (115 aa)) form the Response regulatory domain. A 4-aspartylphosphate modification is found at D48. Residues 129 to 227 (SMAMRFSDLT…VRGVGYVLRE (99 aa)) constitute a DNA-binding region (ompR/PhoB-type).

Post-translationally, phosphorylated and dephosphorylated by MprB.

The protein resides in the cytoplasm. Its function is as follows. Member of the two-component regulatory system MprB/MprA which contributes to maintaining a balance among several systems involved in stress resistance and is required for establishment and maintenance of persistent infection in the host. Functions as a transcriptional regulator that recognizes a 19-bp nucleotide motif comprizing two loosely conserved 8-bp direct DNA-binding motif repeats separated by a 3-bp spacer region. The polypeptide is Response regulator MprA (mprA) (Mycobacterium tuberculosis (strain ATCC 25177 / H37Ra)).